We begin with the raw amino-acid sequence, 183 residues long: MRPQLRGNQRNRIRWWQHNSKKCNQTEKWHNVDWISKQPLRGRTRRDRLLHELDAASQSDPLPGGDGLTGGDSKATRRTSPRYYPPSEATAGRWPVDRFLRVPLQRAPDPRLRTIHPVTESALARKSRGLAGVTRQIHRAVPQHIADYNDGGDMGSRFDNLPGVAASVEACGNHVLVTRRSRT.

Residues 54–89 form a disordered region; sequence DAASQSDPLPGGDGLTGGDSKATRRTSPRYYPPSEA.

This is an uncharacterized protein from Human cytomegalovirus (strain AD169) (HHV-5).